A 509-amino-acid polypeptide reads, in one-letter code: ATP synthase subunit alpha (509 aa).

ATP is bound at residue 171–178; the sequence is GDRKTGKT.

Belongs to the ATPase alpha/beta chains family. In terms of assembly, F-type ATPases have 2 components, CF(1) - the catalytic core - and CF(0) - the membrane proton channel. CF(1) has five subunits: alpha(3), beta(3), gamma(1), delta(1), epsilon(1). CF(0) has three main subunits: a(1), b(2) and c(9-12). The alpha and beta chains form an alternating ring which encloses part of the gamma chain. CF(1) is attached to CF(0) by a central stalk formed by the gamma and epsilon chains, while a peripheral stalk is formed by the delta and b chains.

It is found in the cell inner membrane. It carries out the reaction ATP + H2O + 4 H(+)(in) = ADP + phosphate + 5 H(+)(out). Produces ATP from ADP in the presence of a proton gradient across the membrane. The alpha chain is a regulatory subunit. The chain is ATP synthase subunit alpha from Ehrlichia chaffeensis (strain ATCC CRL-10679 / Arkansas).